The chain runs to 254 residues: Aspartate/glutamate leucyltransferase (254 aa).

Belongs to the R-transferase family. Bpt subfamily.

It is found in the cytoplasm. It catalyses the reaction N-terminal L-glutamyl-[protein] + L-leucyl-tRNA(Leu) = N-terminal L-leucyl-L-glutamyl-[protein] + tRNA(Leu) + H(+). The enzyme catalyses N-terminal L-aspartyl-[protein] + L-leucyl-tRNA(Leu) = N-terminal L-leucyl-L-aspartyl-[protein] + tRNA(Leu) + H(+). Functionally, functions in the N-end rule pathway of protein degradation where it conjugates Leu from its aminoacyl-tRNA to the N-termini of proteins containing an N-terminal aspartate or glutamate. The chain is Aspartate/glutamate leucyltransferase from Xylella fastidiosa (strain M23).